Consider the following 103-residue polypeptide: DNA-binding protein TRF1 (103 aa).

Its function is as follows. DNA-binding protein that recognizes the inverted terminal repeats of the pGKl linear DNA plasmids. The sequence is that of DNA-binding protein TRF1 (TRF1) from Kluyveromyces lactis (strain ATCC 8585 / CBS 2359 / DSM 70799 / NBRC 1267 / NRRL Y-1140 / WM37) (Yeast).